The following is a 180-amino-acid chain: Regulator of G-protein signaling 8 (180 aa).

Ser26 is modified (phosphoserine). In terms of domain architecture, RGS spans 56–171 (SFDVLLSHKY…FLRSKMYLDL (116 aa)).

As to quaternary structure, interacts with GNAO1 and GNAI3. Expressed at high levels in brain. Very little expression detected in other tissues. Detected in Purkinje cells in the cerebellum.

The protein localises to the cell membrane. The protein resides in the membrane. It localises to the perikaryon. It is found in the cell projection. Its subcellular location is the dendrite. The protein localises to the nucleus. Regulates G protein-coupled receptor signaling cascades, including signaling via muscarinic acetylcholine receptor CHRM2 and dopamine receptor DRD2. Inhibits signal transduction by increasing the GTPase activity of G protein alpha subunits, thereby driving them into their inactive GDP-bound form. Modulates the activity of potassium channels that are activated in response to DRD2 and CHRM2 signaling. The protein is Regulator of G-protein signaling 8 (Rgs8) of Rattus norvegicus (Rat).